The following is a 510-amino-acid chain: Anaerobic nitric oxide reductase transcription regulator NorR (510 aa).

The region spanning 188–417 (IIGNSQGMRT…LEHVIKRAAV (230 aa)) is the Sigma-54 factor interaction domain. ATP is bound by residues 216–223 (GETGVGKE) and 279–288 (ADGGTLFLDE). Positions 486–505 (WAATARQLELDSGNLHRLAK) form a DNA-binding region, H-T-H motif.

The protein operates within nitrogen metabolism; nitric oxide reduction. Its function is as follows. Required for the expression of anaerobic nitric oxide (NO) reductase, acts as a transcriptional activator for at least the norVW operon. Activation also requires sigma-54. The protein is Anaerobic nitric oxide reductase transcription regulator NorR of Vibrio vulnificus (strain CMCP6).